We begin with the raw amino-acid sequence, 419 residues long: UDP-N-acetylglucosamine 1-carboxyvinyltransferase (419 aa).

A phosphoenolpyruvate-binding site is contributed by 22-23 (KN). UDP-N-acetyl-alpha-D-glucosamine is bound at residue R93. C117 serves as the catalytic Proton donor. The residue at position 117 (C117) is a 2-(S-cysteinyl)pyruvic acid O-phosphothioketal. UDP-N-acetyl-alpha-D-glucosamine is bound by residues D307 and I329.

Belongs to the EPSP synthase family. MurA subfamily.

The protein localises to the cytoplasm. It carries out the reaction phosphoenolpyruvate + UDP-N-acetyl-alpha-D-glucosamine = UDP-N-acetyl-3-O-(1-carboxyvinyl)-alpha-D-glucosamine + phosphate. The protein operates within cell wall biogenesis; peptidoglycan biosynthesis. Its function is as follows. Cell wall formation. Adds enolpyruvyl to UDP-N-acetylglucosamine. The chain is UDP-N-acetylglucosamine 1-carboxyvinyltransferase from Shewanella frigidimarina (strain NCIMB 400).